The primary structure comprises 81 residues: uncharacterized protein (81 aa).

This is an uncharacterized protein from Archaeoglobus fulgidus (strain ATCC 49558 / DSM 4304 / JCM 9628 / NBRC 100126 / VC-16).